The sequence spans 296 residues: GTP cyclohydrolase FolE2 (296 aa).

This sequence belongs to the GTP cyclohydrolase IV family.

The enzyme catalyses GTP + H2O = 7,8-dihydroneopterin 3'-triphosphate + formate + H(+). It participates in cofactor biosynthesis; 7,8-dihydroneopterin triphosphate biosynthesis; 7,8-dihydroneopterin triphosphate from GTP: step 1/1. In terms of biological role, converts GTP to 7,8-dihydroneopterin triphosphate. The protein is GTP cyclohydrolase FolE2 of Ectopseudomonas mendocina (strain ymp) (Pseudomonas mendocina).